A 199-amino-acid chain; its full sequence is Casparian strip membrane protein 1 (199 aa).

Residues 1–37 are Cytoplasmic-facing; that stretch reads MKSESAAIDIPESSSVAKGKAPLIAVSRNEKGGYRKG. Residues 38 to 58 traverse the membrane as a helical segment; the sequence is IAIFDFILRLAAIATALAAAA. Topologically, residues 59–87 are extracellular; that stretch reads AMGTSDETLPFFTQFFQFQASYDDLPTFQ. A helical membrane pass occupies residues 88-108; that stretch reads FFVIAIAIVGGYLVLSLPFSI. Residues 109 to 120 are Cytoplasmic-facing; that stretch reads VAIVRPHAVGPR. The helical transmembrane segment at 121–141 threads the bilayer; that stretch reads LLLIILDAVALTLNTAAGAAA. Residues 142 to 173 are Extracellular-facing; it reads AAIVYLAHNGNSNTNWLAICQQYGDFCQKVSG. Residues 174 to 194 traverse the membrane as a helical segment; that stretch reads AVVASFITVVIFVFLIVLSAF. The Cytoplasmic portion of the chain corresponds to 195–199; that stretch reads ALRRH.

This sequence belongs to the Casparian strip membrane proteins (CASP) family. As to quaternary structure, homodimer and heterodimers.

It localises to the cell membrane. Functionally, regulates membrane-cell wall junctions and localized cell wall deposition. Required for establishment of the Casparian strip membrane domain (CSD) and the subsequent formation of Casparian strips, a cell wall modification of the root endodermis that determines an apoplastic barrier between the intraorganismal apoplasm and the extraorganismal apoplasm and prevents lateral diffusion. The polypeptide is Casparian strip membrane protein 1 (Populus trichocarpa (Western balsam poplar)).